Consider the following 156-residue polypeptide: Small ribosomal subunit protein uS7 (156 aa).

It belongs to the universal ribosomal protein uS7 family. In terms of assembly, part of the 30S ribosomal subunit. Contacts proteins S9 and S11.

One of the primary rRNA binding proteins, it binds directly to 16S rRNA where it nucleates assembly of the head domain of the 30S subunit. Is located at the subunit interface close to the decoding center, probably blocks exit of the E-site tRNA. In Nitrobacter winogradskyi (strain ATCC 25391 / DSM 10237 / CIP 104748 / NCIMB 11846 / Nb-255), this protein is Small ribosomal subunit protein uS7.